The chain runs to 371 residues: tRNA-specific 2-thiouridylase MnmA (371 aa).

Residues 8–15 (GMSGGVDS) and methionine 34 each bind ATP. Residues 94–96 (NPD) are interaction with target base in tRNA. The active-site Nucleophile is the cysteine 99. Cysteines 99 and 195 form a disulfide. Residue glycine 123 coordinates ATP. The interaction with tRNA stretch occupies residues 145-147 (KDQ). Cysteine 195 acts as the Cysteine persulfide intermediate in catalysis. Positions 309–310 (RY) are interaction with tRNA.

Belongs to the MnmA/TRMU family.

The protein resides in the cytoplasm. It catalyses the reaction S-sulfanyl-L-cysteinyl-[protein] + uridine(34) in tRNA + AH2 + ATP = 2-thiouridine(34) in tRNA + L-cysteinyl-[protein] + A + AMP + diphosphate + H(+). Functionally, catalyzes the 2-thiolation of uridine at the wobble position (U34) of tRNA, leading to the formation of s(2)U34. This Methylococcus capsulatus (strain ATCC 33009 / NCIMB 11132 / Bath) protein is tRNA-specific 2-thiouridylase MnmA.